A 525-amino-acid polypeptide reads, in one-letter code: Bifunctional purine biosynthesis protein PurH (525 aa).

The MGS-like domain maps to 1–149; sequence MSDPVIKRAL…KNNESVTVVT (149 aa).

The protein belongs to the PurH family.

It catalyses the reaction (6R)-10-formyltetrahydrofolate + 5-amino-1-(5-phospho-beta-D-ribosyl)imidazole-4-carboxamide = 5-formamido-1-(5-phospho-D-ribosyl)imidazole-4-carboxamide + (6S)-5,6,7,8-tetrahydrofolate. The enzyme catalyses IMP + H2O = 5-formamido-1-(5-phospho-D-ribosyl)imidazole-4-carboxamide. It participates in purine metabolism; IMP biosynthesis via de novo pathway; 5-formamido-1-(5-phospho-D-ribosyl)imidazole-4-carboxamide from 5-amino-1-(5-phospho-D-ribosyl)imidazole-4-carboxamide (10-formyl THF route): step 1/1. The protein operates within purine metabolism; IMP biosynthesis via de novo pathway; IMP from 5-formamido-1-(5-phospho-D-ribosyl)imidazole-4-carboxamide: step 1/1. The sequence is that of Bifunctional purine biosynthesis protein PurH from Pelodictyon phaeoclathratiforme (strain DSM 5477 / BU-1).